A 541-amino-acid polypeptide reads, in one-letter code: Glutamyl-tRNA(Gln) amidotransferase subunit B, mitochondrial (541 aa).

This sequence belongs to the GatB/GatE family. GatB subfamily. As to quaternary structure, subunit of the heterotrimeric GatFAB amidotransferase (AdT) complex, composed of A, B and F subunits.

The protein localises to the mitochondrion. The catalysed reaction is L-glutamyl-tRNA(Gln) + L-glutamine + ATP + H2O = L-glutaminyl-tRNA(Gln) + L-glutamate + ADP + phosphate + H(+). Allows the formation of correctly charged Gln-tRNA(Gln) through the transamidation of misacylated Glu-tRNA(Gln) in the mitochondria. The reaction takes place in the presence of glutamine and ATP through an activated gamma-phospho-Glu-tRNA(Gln). In Saccharomyces cerevisiae (strain YJM789) (Baker's yeast), this protein is Glutamyl-tRNA(Gln) amidotransferase subunit B, mitochondrial.